A 219-amino-acid polypeptide reads, in one-letter code: PKHD-type hydroxylase Plav_0037 (219 aa).

The Fe2OG dioxygenase domain maps to 78–172 (NFIRILLSRY…RRAAVGWIRS (95 aa)). 3 residues coordinate Fe cation: His96, Asp98, and His153. Arg163 serves as a coordination point for 2-oxoglutarate.

Fe(2+) is required as a cofactor. Requires L-ascorbate as cofactor.

The sequence is that of PKHD-type hydroxylase Plav_0037 from Parvibaculum lavamentivorans (strain DS-1 / DSM 13023 / NCIMB 13966).